The sequence spans 501 residues: TNF receptor-associated factor 2 (501 aa).

Ala2 is subject to N-acetylalanine. At Ser5 the chain carries Phosphoserine. Residue Thr7 is modified to Phosphothreonine. A Phosphoserine modification is found at Ser11. Thr22 is subject to Phosphothreonine. A Glycyl lysine isopeptide (Lys-Gly) (interchain with G-Cter in ubiquitin) cross-link involves residue Lys31. The segment at 34-73 (CSACRNVLRRPFQAQCGHRYCSFCLASILSSGPQNCAACV) adopts an RING-type zinc-finger fold. Thr117 is modified (phosphothreonine; by PKC). 2 consecutive TRAF-type zinc fingers follow at residues 124-180 (CHEG…AHHE) and 177-233 (AHHE…EKQQ). The tract at residues 283-293 (ENIVCVLNREV) is important for interaction with BIRC2 and BIRC3. A coiled-coil region spans residues 299 to 348 (TAEACSRQHRLDQDKIEALSSKVQQLERSIGLKDLAMADLEQKVLEMEAS). Lys320 is covalently cross-linked (Glycyl lysine isopeptide (Lys-Gly) (interchain with G-Cter in ubiquitin)). In terms of domain architecture, MATH spans 351–496 (DGVFIWKISD…DDAIFIKAIV (146 aa)).

The protein belongs to the TNF receptor-associated factor family. A subfamily. As to quaternary structure, homotrimer. Heterotrimer with TRAF1. Heterotrimer with TRAF3 (via TRAF domain). The domain containing the RING-type and the first TRAF-type zinc finger can also form homodimers (in vitro). Interacts with TNFRSF1B/TNFR2. Interacts with TNFRSF5/CD40. Interacts with TNFRSF4, TNFRSF7/CD27, TNFRSF8/CD30, TNFRSF9/CD137, TNFRSF11A/RANK, TNFRSF13B/TACI, TNFRSF14, TNFRSF16/NGFR, TNFRSF17/BCMA, TNFRSF18/AITR, TNFRSF19/TROY, TNFRSF19L/RELT and EDAR. Stimulation of TNF-alpha receptor TNFRSF1A leads to the formation of two distinct signaling complexes. Plasma membrane-bound complex I is composed of TNFRSF1A, TRADD, RIPK1, TRAF2 and BIRC2/c-IAP1 or BIRC3 which interacts with CHUCK/IKK-alpha, IKBKB/IKK-beta and IKBKG/IKK-gamma promoting cell survival. Subsequently, TRADD, RIPK1 and TRAF2 dissociate from TNFRSF1A and form cytoplasmic complex II with FADD and caspase CASP8 promoting cell apoptosis. Interacts with TRADD. Identified in a complex with TNFRSF1A, RIPK1 and IKBKB/IKK-beta. Interacts with RIPK2. Interacts with BIRC2 and BIRC3 N-terminus; a single BIRC2 or BIRC3 molecule interacts with a heterotrimer formed by TRAF1 and TRAF2, or a TRAF2 homotrimer. Identified in a complex composed of TRAF2, TRAF3, BIRC2 and BIRC3. Interacts with BIRC2; the interaction promotes BIRC2 stability. Interaction with BIRC2 and/or BIRC3 is essential for ubiquitination of IKBKE, degradation of NFKBIA and activation of NF-kappa-B. Within complex I, phosphorylated TRAF2 interacts (via 'Lys-63'-linked polyubiquitin chains) with CHUCK/IKK-alpha, IKBKB/IKK-beta, IKBKG/IKK-gamma TAB2, TAB3 and TAK1 in response to TNF-alpha stimulation. Within complex I, interacts with UXT isoform 1 (via TPQE motif); the interaction prevents the recruitment of FADD and CASP8/caspase 8 to complex I. Forms a complex composed of TNFRSF8/CD30 or TNFRSF1B/TNFR2, and TRAF1, TRAF2 and E3 ligase TRAIP. Within the complex, interacts with TRAIP; the interaction inhibits TRAF2-mediated NF-kappa B activation. Component of a complex composed of TANK and TBK1. Interacts with TRPC4AP. Interacts with MAP3K1/MEKK1, MAP3K5/ASK1 and MAP3K11/MLK3 in response to TNF-alpha stimulation; the interaction leads to JNK activation and interaction with MAP3K5 is inhibited by PRMT1. Component of a complex composed of MAP3K14/NIK BIRC3 and TRAF3; the interaction leads to BIRC2/3-mediated ubiquitination of TRAF3 upon CD40 engagement in a TRAF2-dependent manner. Interacts with MAP3K14/NIK in response to TNF-alpha stimulation; the interaction leads to NF-kappa B activation. Interacts with PEG3; the interaction may promote TRAF2-mediated NF-kappa B activation. Interacts with HIVEP3; the interaction may inhibit TNF-alpha-TRAF2-mediated NF-kappa B and JNK activation. Interacts with TANK/ITRAF; the interaction prevents interaction between TNFRSF1B/TNFR2 and TRAF2. Interacts with deubiquitinating enzyme CYLD; the interaction results in the deubiquitination and inactivation of TRAF2. Interacts with SIAH2; the interaction leads to TRAF2 ubiquitination and degradation. Interacts with E2 conjugating enzyme UBE2N/Ubc13, E3 ligase ITCH and RNF11 in response to TNF-alpha stimulation. Interacts with ubiquitin-editing enzyme TNFAIP3/A20 in response to TNF-alpha stimulation; the interaction promotes TRAF2 dissociation from UBE2N/Ubc13, ITCH, RNF11 and TAX1BP1 and prevents prolonged TRAF-2 ubiquitination. Interacts with TAX1BP1 in response to TNF-alpha stimulation; the interaction promotes TRAF2 dissociation from UBE2N/Ubc13 and TNFAIP3/A20, and prevents prolonged TRAF-2 ubiquitination. Interacts (via C-terminus) with EIF2AK2/PKR (via the kinase catalytic domain). Interacts with deubiquitinating enzyme USP48. Interacts with PTPN2; probably involved in TNF-mediated signaling. Interacts with Toll-like receptor TLR4/3 adapter TICAM1/TRIF; the interaction may promote TICAM1 ubiquitination. Interacts with kinase/endoribonuclease ERN1/IRE1 and DAB2IP in response to ER stress; the interaction requires DAB2IP. Interacts with ERN1/IRE1 and TAOK3 in response to ER stress; the interaction may promote TRAF2 phosphorylation. Interacts (via zinc fingers) with DAB2IP (via C-terminus PER domain)in response to TNF-alpha stimulation. Interacts with CASP8AP2/FLASH. Interacts with NFATC2IP; the interaction may repress IL-4 production in T cells. Interacts with kinase CDK9. Interacts with sphingosine kinase 1 SPHK1. Interacts with kinase TNIK. Interacts with TRAFD1. Interacts with DNA phosphodiesterase TDP2. Interacts with MAVS/IPS1. Interacts with CARD14. Interacts with Epstein-Barr virus LMP1/BNFL1. Interacts with GPS2. Interacts with XPNPEP3. Interacts with RIPK3. Interacts with RELL2. Interacts with LRRC19. Interacts with GAPDH; promoting TRAF2 ubiquitination. In terms of processing, phosphorylated at several serine residues within the first 128 amino acid residues. Phosphorylated at Thr-117 in response to signaling via TNF and TNFRSF1A. Phosphorylation at Thr-117 is required for 'Lys-63'-linked polyubiquitination, but not for 'Lys-48'-linked polyubiquitination. Phosphorylation at Thr-117 is important for interaction with IKKA and IKKB, activation of IKK and subsequent activation of NF-kappa-B. Post-translationally, undergoes both 'Lys-48'-linked and 'Lys-63'-linked polyubiquitination. Polyubiquitinated via 'Lys-63'-linked ubiquitin in response to TNF signaling; this requires prior phosphorylation at Thr-117. 'Lys-63'-linked polyubiquitination promotes TRAF2-mediated activation of NF-kappa-B. Can be polyubiquitinated at several Lys residues via 'Lys-48'-linked ubiquitin chains in response to TNF signaling, leading to proteasomal degradation. Autoubiquitinated, leading to its subsequent proteasomal degradation. Polyubiquitinated by BIRC2 and SIAH2, leading to its subsequent proteasomal degradation. Deubiquitinated by CYLD, a protease that specifically cleaves 'Lys-63'-linked polyubiquitin chains. Ubiquination is inhibited by LRRC19; inhibits proteasomal degradation. Ubiquitinated at Lys-320 by the SCF(FBXL2) complex, leading to its degradation by the proteasome. Ubiquitinated by E3 ubiquitin-protein ligase complex containing FBXO7; leading to repression of NF-kappa-B signaling.

Its subcellular location is the cytoplasm. The catalysed reaction is S-ubiquitinyl-[E2 ubiquitin-conjugating enzyme]-L-cysteine + [acceptor protein]-L-lysine = [E2 ubiquitin-conjugating enzyme]-L-cysteine + N(6)-ubiquitinyl-[acceptor protein]-L-lysine.. It participates in protein modification; protein ubiquitination. Has very low E3 ubiquitin ligase activity in the absence of sphingosine-1-phosphate. E3 ubiquitin ligase activity is strongly activated by cytoplasmic sphingosine-1-phosphate. In terms of biological role, E3 ubiquitin-protein ligase that regulates activation of NF-kappa-B and JNK and plays a central role in the regulation of cell survival and apoptosis. Catalyzes 'Lys-63'-linked ubiquitination of target proteins, such as BIRC3, IKBKE, MLST8, RIPK1 and TICAM1. Is an essential constituent of several E3 ubiquitin-protein ligase complexes, where it promotes the ubiquitination of target proteins by bringing them into contact with other E3 ubiquitin ligases. Regulates BIRC2 and BIRC3 protein levels by inhibiting their autoubiquitination and subsequent degradation; this does not depend on the TRAF2 RING-type zinc finger domain. Plays a role in mediating activation of NF-kappa-B by EIF2AK2/PKR. In complex with BIRC2 or BIRC3, promotes ubiquitination of IKBKE. Acts as a regulator of mTORC1 and mTORC2 assembly by mediating 'Lys-63'-linked ubiquitination of MLST8, thereby inhibiting formation of the mTORC2 complex, while facilitating assembly of the mTORC1 complex. Required for normal antibody isotype switching from IgM to IgG. This chain is TNF receptor-associated factor 2, found in Homo sapiens (Human).